Here is a 214-residue protein sequence, read N- to C-terminus: CASP-like protein UU5 (214 aa).

The disordered stretch occupies residues 1-20 (MSTVAQDSAPGGGKIQDAME). Residues 1 to 57 (MSTVAQDSAPGGGKIQDAMEQGAPGASSAAVVPEGGHYTQTPSPAFQAVKKNINHMS) lie on the Cytoplasmic side of the membrane. A helical membrane pass occupies residues 58–78 (AFSLGLRVAEFVLSVIAFSLM). Over 79 to 99 (ASADQNGAVYSTFTSYSFVLA) the chain is Extracellular. The helical transmembrane segment at 100–120 (VNVLVVFYTIGQIIMSVLLLV) threads the bilayer. Residues 121 to 138 (SGSTPKKIYLFITFGCDQ) are Cytoplasmic-facing. The chain crosses the membrane as a helical span at residues 139–159 (LSAFLLMAAGAAGASVALIIN). The Extracellular portion of the chain corresponds to 160–193 (RGGVTDAYGNGCIDGKITSFCSHAQASVAFTFLS). The helical transmembrane segment at 194–214 (FFCMVISSLLGVYSLAPYLIL) threads the bilayer.

It belongs to the Casparian strip membrane proteins (CASP) family. In terms of assembly, homodimer and heterodimers.

The protein localises to the cell membrane. The protein is CASP-like protein UU5 of Physcomitrium patens (Spreading-leaved earth moss).